The following is a 404-amino-acid chain: Homoserine O-succinyltransferase (404 aa).

Positions 1 to 25 (MTDIQADPAVTAADAAQADTSSPTA) are enriched in low complexity. A disordered region spans residues 1–30 (MTDIQADPAVTAADAAQADTSSPTAHQGKP). In terms of domain architecture, AB hydrolase-1 spans 75–384 (NAVLICHALN…HGHDAFLLED (310 aa)). Ser179 functions as the Nucleophile in the catalytic mechanism. Arg249 lines the substrate pocket. Residues Asp344 and His377 contribute to the active site. Asp378 is a binding site for substrate.

Belongs to the AB hydrolase superfamily. MetX family. Homodimer.

It is found in the cytoplasm. The catalysed reaction is L-homoserine + succinyl-CoA = O-succinyl-L-homoserine + CoA. It participates in amino-acid biosynthesis; L-methionine biosynthesis via de novo pathway; O-succinyl-L-homoserine from L-homoserine: step 1/1. In terms of biological role, transfers a succinyl group from succinyl-CoA to L-homoserine, forming succinyl-L-homoserine. This chain is Homoserine O-succinyltransferase, found in Ralstonia pickettii (strain 12J).